Reading from the N-terminus, the 605-residue chain is Kelch-like protein 41b (605 aa).

The BTB domain occupies 32–102; the sequence is VDCTLKIGDR…YSAEIDLVDD (71 aa). Positions 136-238 constitute a BACK domain; that stretch reads CLAVFRLGLV…PEKYFREKVE (103 aa). Kelch repeat units follow at residues 345–397, 398–446, 447–494, 496–541, and 543–598; these read QLFI…ESEN, LLFA…SHNN, LVYC…VHKG, IIVT…SSGG, and LFSI…MRLN.

It is found in the cytoplasm. The protein localises to the cytoskeleton. It localises to the sarcoplasmic reticulum membrane. Its subcellular location is the endoplasmic reticulum membrane. In terms of biological role, involved in skeletal muscle development and maintenance. This Danio rerio (Zebrafish) protein is Kelch-like protein 41b.